The following is a 272-amino-acid chain: Bis(5'-nucleosyl)-tetraphosphatase, symmetrical (272 aa).

It belongs to the Ap4A hydrolase family.

The enzyme catalyses P(1),P(4)-bis(5'-adenosyl) tetraphosphate + H2O = 2 ADP + 2 H(+). Functionally, hydrolyzes diadenosine 5',5'''-P1,P4-tetraphosphate to yield ADP. The protein is Bis(5'-nucleosyl)-tetraphosphatase, symmetrical of Shewanella frigidimarina (strain NCIMB 400).